A 272-amino-acid polypeptide reads, in one-letter code: Phosphate import ATP-binding protein PstB 1 (272 aa).

The ABC transporter domain occupies 26–267 (LEIRNLDLRY…PKKRKTEDYI (242 aa)). 58-65 (GPSGCGKS) is a binding site for ATP.

This sequence belongs to the ABC transporter superfamily. Phosphate importer (TC 3.A.1.7) family. In terms of assembly, the complex is composed of two ATP-binding proteins (PstB), two transmembrane proteins (PstC and PstA) and a solute-binding protein (PstS).

The protein resides in the cell inner membrane. The enzyme catalyses phosphate(out) + ATP + H2O = ADP + 2 phosphate(in) + H(+). Its function is as follows. Part of the ABC transporter complex PstSACB involved in phosphate import. Responsible for energy coupling to the transport system. The polypeptide is Phosphate import ATP-binding protein PstB 1 (Shewanella oneidensis (strain ATCC 700550 / JCM 31522 / CIP 106686 / LMG 19005 / NCIMB 14063 / MR-1)).